Here is a 319-residue protein sequence, read N- to C-terminus: Cyclin-dependent kinase 4 (319 aa).

The Protein kinase domain maps to 9–295 (YEPVAEIGVG…ASDALLHPFF (287 aa)). ATP contacts are provided by residues 15–23 (IGVGAYGTV) and Lys38. The active-site Proton acceptor is Asp140. Thr172 carries the phosphothreonine; by CAK modification.

This sequence belongs to the protein kinase superfamily. CMGC Ser/Thr protein kinase family. CDC2/CDKX subfamily. As to quaternary structure, forms a stable complex with D-type G1 cyclins.

It is found in the cytoplasm. The catalysed reaction is L-seryl-[protein] + ATP = O-phospho-L-seryl-[protein] + ADP + H(+). It catalyses the reaction L-threonyl-[protein] + ATP = O-phospho-L-threonyl-[protein] + ADP + H(+). Phosphorylation at Thr-172 is necessary for enzymatic activity. Functionally, probably involved in the control of the cell cycle. The polypeptide is Cyclin-dependent kinase 4 (cdk4) (Xenopus laevis (African clawed frog)).